We begin with the raw amino-acid sequence, 390 residues long: MPPKSLSNLSQTAGVNQSGFFPGASERDFLPATDRTTAEFVIRCVIPSLYLLIITVGLLGNIVLVKIFLTNSAMRSVPNIFISNLAAGDVLLLLTCVPVDASRYFLDEWMFGKVGCKLIPVIQLTSVGVSVFTLTALSADRYRAIVNPMDIQTSGAVLWTCVKAGGIWVVSVLLAVPEAVFSEVARIDGLDNGSFTACIPYPQTDELHPKIHSVLIFLVYFLIPLGIISVYYYHIAKTLIKSAHNLPGEYNEHTKKQMETRKRLAKIVLVFVGCFVFCWFPNHILYMYRSFNYNEIDPSLGHMIVTLVARVLSFCNSCVNPFALYLLSESFRKHFNNQLCCGRKSYRERSPSYLLSSSAVRMTSLKSNAKNIVTNSVVPNGHSVKQEMAL.

At 1-44 (MPPKSLSNLSQTAGVNQSGFFPGASERDFLPATDRTTAEFVIRC) the chain is on the extracellular side. N-linked (GlcNAc...) asparagine glycans are attached at residues N8 and N16. Residues 45-65 (VIPSLYLLIITVGLLGNIVLV) traverse the membrane as a helical segment. Over 66–76 (KIFLTNSAMRS) the chain is Cytoplasmic. The helical transmembrane segment at 77–97 (VPNIFISNLAAGDVLLLLTCV) threads the bilayer. The Extracellular segment spans residues 98 to 117 (PVDASRYFLDEWMFGKVGCK). C116 and C198 form a disulfide bridge. A helical transmembrane segment spans residues 118-138 (LIPVIQLTSVGVSVFTLTALS). Over 139-155 (ADRYRAIVNPMDIQTSG) the chain is Cytoplasmic. Residues 156 to 176 (AVLWTCVKAGGIWVVSVLLAV) traverse the membrane as a helical segment. Residues 177–210 (PEAVFSEVARIDGLDNGSFTACIPYPQTDELHPK) are Extracellular-facing. N192 is a glycosylation site (N-linked (GlcNAc...) asparagine). Residues 211-231 (IHSVLIFLVYFLIPLGIISVY) form a helical membrane-spanning segment. Topologically, residues 232 to 266 (YYHIAKTLIKSAHNLPGEYNEHTKKQMETRKRLAK) are cytoplasmic. A helical transmembrane segment spans residues 267–287 (IVLVFVGCFVFCWFPNHILYM). The Extracellular portion of the chain corresponds to 288-305 (YRSFNYNEIDPSLGHMIV). Residues 306–328 (TLVARVLSFCNSCVNPFALYLLS) form a helical membrane-spanning segment. Residues 329-390 (ESFRKHFNNQ…GHSVKQEMAL (62 aa)) lie on the Cytoplasmic side of the membrane. C341 carries S-palmitoyl cysteine lipidation. S352 is modified (phosphoserine).

It belongs to the G-protein coupled receptor 1 family. As to expression, highly expressed in peripheral tissues where it is detected in the respiratory system, circulatory system, digestive system, urogenital system, lymphatic organs and endocrine system (at protein level). In the testis, expressed mainly in Leydig cells (at protein level).

Its subcellular location is the cell membrane. In terms of biological role, receptor for neuromedin-B. Contributes to the maintenance of basal sigh rate through signaling in the pre-Botzinger complex, a cluster of several thousand neurons in the ventrolateral medulla responsible for inspiration during respiratory activity. Contributes to the induction of sneezing following exposure to chemical irritants or allergens which causes release of NMB by nasal sensory neurons and activation of NMBR-expressing neurons in the sneeze-evoking region of the brainstem. These in turn activate neurons of the caudal ventral respiratory group, giving rise to the sneezing response. Contributes to induction of acute itch, possibly through its activation on dorsal root ganglion neurons by the NMB peptide. Plays a role in the innate immune response to influenza A virus infection by enhancing interferon alpha expression and reducing expression of IL6. Plays a role in CSF1-induced proliferation of osteoclast precursors by contributing to the positive regulation of the expression of the CSF1 receptor CSF1R. The polypeptide is Neuromedin-B receptor (NMBR) (Sus scrofa (Pig)).